Consider the following 401-residue polypeptide: Mannonate dehydratase (401 aa).

This sequence belongs to the mannonate dehydratase family. The cofactor is Fe(2+). Mn(2+) serves as cofactor.

It catalyses the reaction D-mannonate = 2-dehydro-3-deoxy-D-gluconate + H2O. It functions in the pathway carbohydrate metabolism; pentose and glucuronate interconversion. Catalyzes the dehydration of D-mannonate. In Brucella canis (strain ATCC 23365 / NCTC 10854 / RM-666), this protein is Mannonate dehydratase.